The following is a 653-amino-acid chain: 23S rRNA 5-hydroxycytidine C2501 synthase (653 aa).

This sequence belongs to the peptidase U32 family. As to quaternary structure, interacts with precursors of the 50S ribosomal subunit.

Its activity is regulated as follows. Iron-sulfur clusters and prephenate are required for ho5C2501 formation. Its function is as follows. Responsible for the formation of the 5-hydroxycytidine modification at the C2501 position (ho5C2501) of 23S rRNA. May be a Fe-S protein that catalyzes ho5C2501 formation using prephenate as a hydroxyl group donor. The protein is 23S rRNA 5-hydroxycytidine C2501 synthase of Escherichia coli (strain K12).